The chain runs to 389 residues: Probable transcription factor FL (389 aa).

Disordered regions lie at residues 1-41 (MDPN…ANVP) and 140-226 (EHDM…HPFV). A compositionally biased stretch (pro residues) spans 19–39 (PPAPAPVPPPPPPPPPPPPAN). Basic residues predominate over residues 159 to 180 (VTGKKQAKKGSAARKGKKARRK). The short motif at 161–168 (GKKQAKKG) is the Nuclear localization signal element. Residues 190–201 (QEDEMDCCDEDG) are compositionally biased toward acidic residues. 3 consecutive DNA-binding regions follow at residues 221 to 225 (REHPF), 290 to 297 (NKPKMRHY), and 361 to 364 (YVPT).

The protein belongs to the FLO/LFY family. In terms of assembly, interacts with APO1. In very young panicle but not in mature florets, mature leaves, roots or apical meristems.

It is found in the nucleus. Functionally, probable transcription factor. Together with APO1, involved in the temporal regulation of meristem size and identity during both vegetative and reproductive developments through interaction with APO1. Promotes flowering. This chain is Probable transcription factor FL, found in Oryza sativa subsp. japonica (Rice).